We begin with the raw amino-acid sequence, 165 residues long: 3-isopropylmalate dehydratase small subunit (165 aa).

This sequence belongs to the LeuD family. LeuD type 2 subfamily. As to quaternary structure, heterodimer of LeuC and LeuD.

The catalysed reaction is (2R,3S)-3-isopropylmalate = (2S)-2-isopropylmalate. It participates in amino-acid biosynthesis; L-leucine biosynthesis; L-leucine from 3-methyl-2-oxobutanoate: step 2/4. In terms of biological role, catalyzes the isomerization between 2-isopropylmalate and 3-isopropylmalate, via the formation of 2-isopropylmaleate. This chain is 3-isopropylmalate dehydratase small subunit, found in Saccharolobus islandicus (strain Y.G.57.14 / Yellowstone #1) (Sulfolobus islandicus).